We begin with the raw amino-acid sequence, 252 residues long: Phosphomannomutase (252 aa).

Aspartate 13 serves as the catalytic Nucleophile. Mg(2+) contacts are provided by aspartate 13 and aspartate 15. Aspartate 15 (proton donor/acceptor) is an active-site residue. Alpha-D-mannose 1-phosphate is bound by residues arginine 22, arginine 124, arginine 135, arginine 142, serine 180, and aspartate 182. Mg(2+)-binding residues include aspartate 208, tyrosine 220, and threonine 225.

Belongs to the eukaryotic PMM family. In terms of assembly, homodimer. The cofactor is Mg(2+). As to expression, expressed in roots, leaves, stems and flowers.

The protein localises to the cytoplasm. The catalysed reaction is alpha-D-mannose 1-phosphate = D-mannose 6-phosphate. It functions in the pathway nucleotide-sugar biosynthesis; GDP-alpha-D-mannose biosynthesis; alpha-D-mannose 1-phosphate from D-fructose 6-phosphate: step 2/2. Functionally, catalyzes the interconversion of mannose-6-phosphate to mannose-1-phosphate, the precursor for the synthesis of GDP-mannose. GDP-mannose is an essential sugar nucleotide for the synthesis of D-mannose-containing cell wall polysaccharides (galactomannans and glucomannans), glycolipids, glycoproteins and the antioxidant L-ascorbate. Involved in the biosynthesis of ascorbate and polysaccharides in response to abiotic stress during seed germination. The sequence is that of Phosphomannomutase from Dendrobium officinale (Orchid).